We begin with the raw amino-acid sequence, 660 residues long: DNA mismatch repair protein MutL (660 aa).

It belongs to the DNA mismatch repair MutL/HexB family.

Its function is as follows. This protein is involved in the repair of mismatches in DNA. It is required for dam-dependent methyl-directed DNA mismatch repair. May act as a 'molecular matchmaker', a protein that promotes the formation of a stable complex between two or more DNA-binding proteins in an ATP-dependent manner without itself being part of a final effector complex. The sequence is that of DNA mismatch repair protein MutL from Streptococcus pyogenes serotype M3 (strain ATCC BAA-595 / MGAS315).